The sequence spans 166 residues: Cofilin-2 (166 aa).

An N-acetylalanine modification is found at alanine 2. Serine 3 carries the post-translational modification Phosphoserine. An ADF-H domain is found at 4–153 (GVTVNDEVIK…KDRSTLGEKL (150 aa)). Threonine 6 bears the Phosphothreonine mark. Residues 30–34 (KKRKK) carry the Nuclear localization signal motif.

It belongs to the actin-binding proteins ADF family. Post-translationally, the phosphorylation of Ser-24 may prevent recognition of the nuclear localization signal.

Its subcellular location is the nucleus matrix. The protein localises to the cytoplasm. It localises to the cytoskeleton. Its function is as follows. Controls reversibly actin polymerization and depolymerization in a pH-sensitive manner. It has the ability to bind G- and F-actin in a 1:1 ratio of cofilin to actin. It is the major component of intranuclear and cytoplasmic actin rods. This is Cofilin-2 (CFL2) from Bos taurus (Bovine).